The primary structure comprises 146 residues: MGGTTDFVLSITIVLVILIIIAYIWYNFTGWSPFKYSKGNTVTFKTPDDSSIAYMRFKNCVFTFTDPKGSLHSIDVTNVLNNMAKGFRDAQNPPSSFTLGGHCQAPLNAFSFILPGVNDRATVATADDAKKWENCDATLTGLQRII.

The helical transmembrane segment at 7–27 threads the bilayer; it reads FVLSITIVLVILIIIAYIWYN.

This sequence belongs to the asfivirus E146L family.

The protein resides in the host membrane. Its subcellular location is the virion. This is an uncharacterized protein from Ornithodoros (relapsing fever ticks).